Reading from the N-terminus, the 514-residue chain is Exoglucanase 1 (514 aa).

The N-terminal stretch at 1 to 17 (MYQKLALISAFLATARA) is a signal peptide. Residues 18–453 (QSACTLQAET…GSTGNSSGGN (436 aa)) are catalytic. 10 cysteine pairs are disulfide-bonded: cysteine 21/cysteine 89, cysteine 36/cysteine 42, cysteine 67/cysteine 88, cysteine 78/cysteine 84, cysteine 155/cysteine 414, cysteine 189/cysteine 227, cysteine 193/cysteine 226, cysteine 247/cysteine 273, cysteine 255/cysteine 260, and cysteine 278/cysteine 348. Residues asparagine 62 and asparagine 81 are each glycosylated (N-linked (GlcNAc...) asparagine). Glutamate 229 serves as the catalytic Nucleophile. Glutamate 234 serves as the catalytic Proton donor. A glycan (N-linked (GlcNAc...) asparagine) is linked at asparagine 287. 2 disordered regions span residues 401 to 427 (NETSSTPGAVRGSCSTSSGVPAQLESN) and 444 to 481 (GSTGNSSGGNPPGGNPPGTTTTRRPATSTGSSPGPTQT). The segment at 454–478 (PPGGNPPGTTTTRRPATSTGSSPGP) is linker. Over residues 460–479 (PGTTTTRRPATSTGSSPGPT) the composition is skewed to low complexity. In terms of domain architecture, CBM1 spans 478-514 (PTQTHYGQCGGIGYSGPTVCASGSTCQVLNPYYSQCL). Intrachain disulfides connect cysteine 486–cysteine 503 and cysteine 497–cysteine 513.

The protein belongs to the glycosyl hydrolase 7 (cellulase C) family.

The enzyme catalyses Hydrolysis of (1-&gt;4)-beta-D-glucosidic linkages in cellulose and cellotetraose, releasing cellobiose from the non-reducing ends of the chains.. Its function is as follows. The biological conversion of cellulose to glucose generally requires three types of hydrolytic enzymes: (1) Endoglucanases which cut internal beta-1,4-glucosidic bonds; (2) Exocellobiohydrolases that cut the disaccharide cellobiose from the non-reducing end of the cellulose polymer chain; (3) Beta-1,4-glucosidases which hydrolyze the cellobiose and other short cello-oligosaccharides to glucose. The polypeptide is Exoglucanase 1 (cbh1) (Hypocrea rufa (Trichoderma viride)).